Consider the following 255-residue polypeptide: NAD kinase (255 aa).

Residue Asp44 is the Proton acceptor of the active site. Residues 44–45, His49, 114–115, Asp144, Ala152, 155–160, and Gln216 each bind NAD(+); these read DG, NE, and SAYNLS.

This sequence belongs to the NAD kinase family. It depends on a divalent metal cation as a cofactor.

It localises to the cytoplasm. The enzyme catalyses NAD(+) + ATP = ADP + NADP(+) + H(+). In terms of biological role, involved in the regulation of the intracellular balance of NAD and NADP, and is a key enzyme in the biosynthesis of NADP. Catalyzes specifically the phosphorylation on 2'-hydroxyl of the adenosine moiety of NAD to yield NADP. The chain is NAD kinase from Rickettsia felis (strain ATCC VR-1525 / URRWXCal2) (Rickettsia azadi).